Reading from the N-terminus, the 250-residue chain is MEDINFASLAPRHGSRPFMGNWQDIGTSNMSGGAFSWGSLWSGIKNFGSTIKNYGSKAWNSSTGQMLRDKLKEQNFQQKVVDGLASGISGVVDLANQAVQNKINSKLDPRPPVEEPPPAVETVSPEGRGEKRPRPDREETLVTQIDEPPSYEEALKQGLPTTRPIAPMATGVLGQHTPVTLDLPPPADTQQKPVLPGPSAVVVTRPSRASLRRAASGPRSMRPVASGNWQSTLNSIVGLGVQSLKRRRCF.

Residues 1–33 (MEDINFASLAPRHGSRPFMGNWQDIGTSNMSGG) constitute a propeptide that is removed on maturation. Positions 34–54 (AFSWGSLWSGIKNFGSTIKNY) are amphipathic alpha-helix essential for membrane lytic activity. The tract at residues 36-53 (SWGSLWSGIKNFGSTIKN) is involved in endosomal membrane lysis. Positions 48–74 (GSTIKNYGSKAWNSSTGQMLRDKLKEQ) are interaction with hexon protein. The Nuclear export signal signature appears at 67 to 76 (LRDKLKEQNF). The segment at 103–147 (INSKLDPRPPVEEPPPAVETVSPEGRGEKRPRPDREETLVTQIDE) is disordered. Residue Ser124 is modified to Phosphoserine; by host. Positions 127–140 (GRGEKRPRPDREET) are enriched in basic and acidic residues. A Nuclear localization signal motif is present at residues 131-135 (KRPRP). Thr143 carries the post-translational modification Phosphothreonine; by host. Positions 148-151 (PPSY) match the PPXY motif motif. Low complexity predominate over residues 206–220 (PSRASLRRAASGPRS). A disordered region spans residues 206–226 (PSRASLRRAASGPRSMRPVAS). A Nuclear export signal motif is present at residues 231–242 (STLNSIVGLGVQ). Residues 233-239 (LNSIVGL) form an interaction with hexon protein region. A binds to importin alpha/beta, involved in hexon nuclear import region spans residues 240 to 250 (GVQSLKRRRCF). The Nuclear localization signal signature appears at 245-248 (KRRR).

It belongs to the adenoviridae protein VI family. In terms of assembly, interacts with hexon protein; this interaction allows nuclear import of hexon trimers and possibly pre-capsid assembly. Interacts (via C-terminal NLS) with importin alpha/beta. Interacts (via PPxY motif) with host NEDD4 ubiquitine ligase; this interaction might play a role in virus intracellular transport during entry. Part of a complex composed of the core-capsid bridging protein, the endosome lysis protein VI and the hexon-linking protein VIII; these interactions bridge the virus core to the capsid. Interacts with peripentonal hexons; this interaction stabilizes the capsid by gluing two peripentonal hexons together and joining them with an adjacent group-of-nine hexon. As to quaternary structure, heterodimer with the viral protease; disulfide-linked. Interacts with the viral protease. In terms of processing, ubiquitinated by Nedd4 following partial capsid disassembly; which might play a role in intracellular virus movement during entry. Contains the major nuclear import and export signals. Proteolytically removed during virion maturation. The processing of the C-terminus turns the precursor into a mature viral structural protein and abrogates its ability to promote hexon import and act as a potential chaperone protein.

Its subcellular location is the host nucleus. It is found in the host cytoplasm. It localises to the virion. During virus assembly, promotes hexon trimers nuclear import through nuclear pore complexes via an importin alpha/beta-dependent mechanism. By analogy to herpesviruses capsid assembly, might act as a chaperone to promote the formation of the icosahedral capsid. Functionally, structural component of the virion that provides increased stability to the particle shell through its interaction with the core-capsid bridging protein and the hexon-linking protein VIII. Fibers shedding during virus entry into host cell allows the endosome lysis protein to be exposed as a membrane-lytic peptide. Exhibits pH-independent membrane fragmentation activity and probably mediates viral rapid escape from host endosome via organellar membrane lysis. It is not clear if it then remains partially associated with the capsid and involved in the intracellular microtubule-dependent transport of capsid to the nucleus, or if it is lost during endosomal penetration. In terms of biological role, cofactor that activates the viral protease. Binds to viral protease in a 1:1 ratio. The sequence is that of Pre-protein VI from Human adenovirus C serotype 2 (HAdV-2).